The sequence spans 492 residues: Trigger factor (492 aa).

Positions 77–96 (EILSSRGEKSATQPAISMTE) are disordered. In terms of domain architecture, PPIase FKBP-type spans 169 to 254 (GDRVTMNYLG…VKEVAAAAAV (86 aa)). Residues 439–492 (ELLADDGEEETETKKKAPAKKKAAAKADDAAEGEEAAPKKKAPAKKKATEADAE) are disordered.

Belongs to the FKBP-type PPIase family. Tig subfamily.

It localises to the cytoplasm. It catalyses the reaction [protein]-peptidylproline (omega=180) = [protein]-peptidylproline (omega=0). Involved in protein export. Acts as a chaperone by maintaining the newly synthesized protein in an open conformation. Functions as a peptidyl-prolyl cis-trans isomerase. The chain is Trigger factor from Agrobacterium fabrum (strain C58 / ATCC 33970) (Agrobacterium tumefaciens (strain C58)).